The primary structure comprises 397 residues: F-box protein At4g11590 (397 aa).

The 47-residue stretch at 24-70 (EKNFNDVPLDVAIEIFMRLPVKSVARFLLLSKFWAEIIRSRHFITSF) folds into the F-box domain.

In terms of assembly, part of a SCF (ASK-cullin-F-box) protein ligase complex. Interacts with ASK16.

It localises to the nucleus. The protein operates within protein modification; protein ubiquitination. Functionally, component of SCF(ASK-cullin-F-box) E3 ubiquitin ligase complexes, which may mediate the ubiquitination and subsequent proteasomal degradation of target proteins. This Arabidopsis thaliana (Mouse-ear cress) protein is F-box protein At4g11590.